The sequence spans 350 residues: Phosphate acyltransferase (350 aa).

It belongs to the PlsX family. As to quaternary structure, homodimer. Probably interacts with PlsY.

It is found in the cytoplasm. The catalysed reaction is a fatty acyl-[ACP] + phosphate = an acyl phosphate + holo-[ACP]. The protein operates within lipid metabolism; phospholipid metabolism. Its function is as follows. Catalyzes the reversible formation of acyl-phosphate (acyl-PO(4)) from acyl-[acyl-carrier-protein] (acyl-ACP). This enzyme utilizes acyl-ACP as fatty acyl donor, but not acyl-CoA. This Phenylobacterium zucineum (strain HLK1) protein is Phosphate acyltransferase.